The primary structure comprises 382 residues: Protein phosphatase 1A (382 aa).

G2 carries N-myristoyl glycine lipidation. The PPM-type phosphatase domain occupies 23–291 (RYGLSSMQGW…DNMSVILICF (269 aa)). 4 residues coordinate Mn(2+): D60, G61, D239, and D282. A phosphoserine mark is found at S375 and S377.

The protein belongs to the PP2C family. As to quaternary structure, monomer. Interacts with SMAD2; the interaction dephosphorylates SMAD2 in its C-terminal SXS motif resulting in disruption of the SMAD2/SMAD4 complex, SMAD2 nuclear export and termination of the TGF-beta-mediated signaling. Interacts with SMAD2; the interaction dephosphorylates SMAD2 in its C-terminal SXS motif resulting in disruption of the SMAD2/SMAD4 complex, SMAD2 nuclear export and termination of the TGF-beta-mediated signaling. Interacts with the phosphorylated form of IKBKB/IKKB. It depends on Mg(2+) as a cofactor. The cofactor is Mn(2+). N-myristoylation is essential for the recognition of its substrates for dephosphorylation.

The protein localises to the nucleus. It is found in the cytoplasm. Its subcellular location is the cytosol. It localises to the membrane. It catalyses the reaction O-phospho-L-seryl-[protein] + H2O = L-seryl-[protein] + phosphate. The catalysed reaction is O-phospho-L-threonyl-[protein] + H2O = L-threonyl-[protein] + phosphate. Functionally, enzyme with a broad specificity. Negatively regulates TGF-beta signaling through dephosphorylating SMAD2 and SMAD3, resulting in their dissociation from SMAD4, nuclear export of the SMADs and termination of the TGF-beta-mediated signaling. Dephosphorylates PRKAA1 and PRKAA2. Plays an important role in the termination of TNF-alpha-mediated NF-kappa-B activation through dephosphorylating and inactivating IKBKB/IKKB. The protein is Protein phosphatase 1A (Ppm1a) of Mus musculus (Mouse).